Reading from the N-terminus, the 159-residue chain is Probable carbonic anhydrase (159 aa).

Residues 33 to 35 (RGD) and 48 to 49 (QD) each bind substrate. H54, H71, and H76 together coordinate Zn(2+).

It belongs to the gamma-class carbonic anhydrase family. The cofactor is Zn(2+).

The enzyme catalyses hydrogencarbonate + H(+) = CO2 + H2O. Its function is as follows. Probably reversibly hydrates carbon dioxide. This is Probable carbonic anhydrase from Methanocaldococcus jannaschii (strain ATCC 43067 / DSM 2661 / JAL-1 / JCM 10045 / NBRC 100440) (Methanococcus jannaschii).